The primary structure comprises 192 residues: MAQPNPLTTPPPGADTQVVPGHVEHTEAHSGAFPPFETSGFLAQLIWLALAFGLLYYLMDKIALPRIQSILHARAERLRADLDQAQAMKAEADAAGVAFETALRDAQGKARDIAQTTRNELAAEAETKRKALEDELNAKLSASEATIRTRTEAAMGNVRTIAGEAASAIVERLTGQAPDRTSLDRALDATAH.

The helical transmembrane segment at 39–59 (SGFLAQLIWLALAFGLLYYLM) threads the bilayer.

This sequence belongs to the ATPase B chain family. As to quaternary structure, F-type ATPases have 2 components, F(1) - the catalytic core - and F(0) - the membrane proton channel. F(1) has five subunits: alpha(3), beta(3), gamma(1), delta(1), epsilon(1). F(0) has three main subunits: a(1), b(2) and c(10-14). The alpha and beta chains form an alternating ring which encloses part of the gamma chain. F(1) is attached to F(0) by a central stalk formed by the gamma and epsilon chains, while a peripheral stalk is formed by the delta and b chains.

It is found in the cell inner membrane. In terms of biological role, f(1)F(0) ATP synthase produces ATP from ADP in the presence of a proton or sodium gradient. F-type ATPases consist of two structural domains, F(1) containing the extramembraneous catalytic core and F(0) containing the membrane proton channel, linked together by a central stalk and a peripheral stalk. During catalysis, ATP synthesis in the catalytic domain of F(1) is coupled via a rotary mechanism of the central stalk subunits to proton translocation. Component of the F(0) channel, it forms part of the peripheral stalk, linking F(1) to F(0). The b'-subunit is a diverged and duplicated form of b found in plants and photosynthetic bacteria. The sequence is that of ATP synthase subunit b 2 (atpF2) from Methylobacterium radiotolerans (strain ATCC 27329 / DSM 1819 / JCM 2831 / NBRC 15690 / NCIMB 10815 / 0-1).